Here is a 2473-residue protein sequence, read N- to C-terminus: MGSIETEGNPPYFAREPIAIVGSSCRFPGGATSPSKLWELLEKPRDVLQEIPATRFNTKAFHHPDSQHHGSTNVKHAYLLDEDPRAFDRDFFSINPKEAEAMDPQQRLLLETVYEGIESTGHSMQQLRGSTTAVFVGCMSFDYHLTAIRGIDSLPQYHGTGTAASILANRVSYFYDWKGPSVTIDTACSSSLVALHQAVSALRNGEAEMAVAAGSNLIIGPEPFVSESKLNMLSPNGRSFMWDAAADGYTRGEGFAAVFLKTLSQAIADGDHIECIIRETGVNSDGKTPGITMPSSESQARLIRDTYARCGLNPARESDRPQYFEAHGTGTQAGDPIEARAIQSVFFPNEREGQLIVGSIKTVIGHTEGTAGIAGVLKASLAVQHGQIPANLHFKDLNPKIRPYYTNLRIPTETTPWPAVSKGYPRRVSVNSFGFGGTNAHAIIESWDGAGSLTNGYALNGNTLKPLGAGPFVLSANSGAALAANAGALADYLRAHPDADLRRLAYTLFRRTDFPFRAAFSATSVEQLAEKLEAGKDSLKSSSRTATIPEVLPPRILGIFTGQGAQWATMGKELYGASSVFRSAIDQMQRALNSLPIEDRPDWSLVDQLDAPAVDSRVGEAIVSQPLCTALQVALVDVLRAAGVELSAVVGHSSGEIGAAYAAGYLDATDAIRVAYYRGFHSHLAQGPGGKRGKMMAVGMSLNQATTFCSEFGGTLTVAASNSQTSCTLAGDAEAIEDAHARLQEKGTFARVLQVDTAYHSHHMKPCAIPYLESMKQCGVTVQKGGKQCRWYSSVWGSDGRSRSFNQADGLLLEGQYWVDNMTQPVLFSQALARALNEDQYFDLALEVGPHPALKGPSAETIKMLTGLSLPYSGVLKRGQNAVTSFSDALGLLWTSFPSSRPLITFDGVRRAFPSREPLKLAVLKGLPAYSWDHPGLIWKESRTSRIFRTQSQPRHELLGHSVTHGERDKREVHWKQLLRLNELPWLAGHRIQGEVLFPASGYLSMAYEAATRLVDDRQPLRLVELHDIDIVRAMRLEQDSSGLEVVFTVRVTAQSDDCITAEVACYSGAVDSVQPLDAPQTGLTAHFTGGVRLWLGEPSTDTLPSRKTPLLPMEALDMEQLYSNLAKEGFNYADLFQAKSMHRRLNRAVVTVSSPSEPSSMRECVHPAPVDTAFQGLLAGFSFPGDGRLGTIYLPTRVECVRVNMMPSESHATVLTADATVTSTGKTTLTGDVDLFDAANARTQVQIRGIHLSAVGQRRDPWLYAGTTWARDVSYGIEPSIKTKLSEADWVLYEQLSRTAYFYLRQLRKKILPQELMLMGKYRKHMMTWVLEHLLPRIEAGEHPEIRAEWKDDTLEMVQQWRASQPSDNNDMNILHAMGKNLVGIVRGTTPPLRVLTQDGMLDRLYVEGLGARDGNHDLAGFVKQLAHQYPRMRIAEVGAGTGGTTRAVLDALGNQYASYTYTDISTGFFENARTLFGQHSSKLSFKTLNIENDPVDQGFPEGTFDMVISSNCLHATRSLGETLRHCRQLLQPGGRLVLLEITRDFLPTQLVMSTLPGWFLGIEDGRVWAPTVSLERWDELLKANGFSGVEISSTPSFCSVIVAQAVDETVQLLREPLAVAPTALPPLGDILIVGGGVTSELASQIQKPLQAAAPSNTVTVLPGLEGIEVPKGAAVLCLSDLDSPVFRDMNSKRFRGLQNVMESAEVVLWVTSGAKSGNDPDANITLGLSSTLRAERMDLRLQFLDVDEPSSVDPSMLASMLLRLAFLDPSKNDELLWVQEPELALKEGALYVPRVVSLDTLNRRSAARHRQVTQLTSVGSEDVAVVVDERQGAFELQTIPFGGATKDEICLQVLASSIRTITCDEYGPVYVCIGRDLVSGDTALALSAVNSSVVKVSEDHILYRWQDDKTTAEYTAHLHLFLVRALAEHLLGSLKGPTWIHGAPHGLREVIDVVAREQSVAVFQTTSDMAMTSDVNFIHPYANKEDLQDFRPKGLQSFINLARQEHRALSAFIHASLPASAIVNKDVASLTASLILPELRILAKQNIHDGLQVPTESVEIVAIDKVSTVTSKELGPAVLIDWSTADTINALVRPLEHRGLFAPDKTYLLCGMTGDLGISVCLWMVENGARNVVLTSRNPNISPSVLNYLSHKGATVRPMAVDITNMDSLRSAYNDIKSSMPPVGGVMNAAMVLRDRLFHHLPWEDFAAVLGPKMVGSKNLDELFGNEQLDFFVCFSSTTSIVGSIGQSAYAAANHYMASLVQQRLQRGLAGSVIHIAILTGFGYIFRRDSEHAETIYKAILPRFDRQSETDLHEMLAEAIVCGRPGSAQPAELITGIRSVFQGEWRDDPRLSCYIGQQQLQDDSSGEQAAGSVSVKDQLASAEDPAECLVILESCFALSLGNLLEIDPEQLDHNMPVANLGIDSLVAIRIREWFLREMGVDMPVLKIMSDTYSMSRMCDDALVEWRRLNKS.

The Ketosynthase family 3 (KS3) domain occupies 15–446 (REPIAIVGSS…GTNAHAIIES (432 aa)). Catalysis depends on for beta-ketoacyl synthase activity residues cysteine 188, histidine 327, and histidine 366. The 324-residue stretch at 559–882 (IFTGQGAQWA…SGVLKRGQNA (324 aa)) folds into the Malonyl-CoA:ACP transacylase (MAT) domain. Residues 956-1099 (HELLGHSVTH…GGVRLWLGEP (144 aa)) are N-terminal hotdog fold. A dehydratase (DH) domain region spans residues 956–1260 (HELLGHSVTH…IHLSAVGQRR (305 aa)). The 307-residue stretch at 956–1262 (HELLGHSVTH…LSAVGQRRDP (307 aa)) folds into the PKS/mFAS DH domain. The active-site Proton acceptor; for dehydratase activity is the histidine 990. The C-terminal hotdog fold stretch occupies residues 1114-1262 (MEALDMEQLY…LSAVGQRRDP (149 aa)). Residue aspartate 1172 is the Proton donor; for dehydratase activity of the active site. Residues 1300-1606 (TAYFYLRQLR…PSFCSVIVAQ (307 aa)) are methyltransfrase (MT) domain. The Ketoreductase (KR) domain occupies 2108-2281 (TYLLCGMTGD…AGSVIHIAIL (174 aa)). The 86-residue stretch at 2388–2473 (AECLVILESC…LVEWRRLNKS (86 aa)) folds into the Carrier domain. Position 2426 is an O-(pantetheine 4'-phosphoryl)serine (serine 2426).

Pantetheine 4'-phosphate is required as a cofactor.

It participates in secondary metabolite biosynthesis. In terms of biological role, reducing polyketide synthase; part of the gene cluster that mediates the biosynthesis of gregatin A, a fungal polyketide featuring an alkylated furanone core. The PKS grgA synthesizes C11 and C4 polyketide chains in the presence and absence of the trans-enoyl reductase grgB, respectively. The polyketide transferase grgF is then responsible for the fusion of the two carbon chains to produce the furanone skeleton of gregatin A. Next, the cytochrome P450 monooxygenase grgG accepts performs the oxidative cyclization to furnish the gregatin scaffold and leads to the formation of desmethylgregatin A. Finally, the O-methyltransferase grgD methylates the carboxyl group of desmethylgregatin A to provide gregatin A. The protein is Reducing polyketide synthase grgA of Penicillium sp.